The chain runs to 335 residues: HTH-type transcriptional regulator LacR (335 aa).

The region spanning 1–58 is the HTH lacI-type domain; sequence MRTIKEIALESGYSPATVSRLLNNDPNLSITADTKNKILEIANKLGYWEDHQEKKIKP. Residues 4–23 constitute a DNA-binding region (H-T-H motif); it reads IKEIALESGYSPATVSRLLN.

Its pathway is carbohydrate metabolism; lactose degradation [regulation]. In terms of biological role, negatively regulates the transcription of the lactose utilization genes lacL and lacM. The protein is HTH-type transcriptional regulator LacR (lacR) of Lactobacillus helveticus (Lactobacillus suntoryeus).